The primary structure comprises 285 residues: Acrosomal protein SP-10 (285 aa).

A signal peptide spans 1-21 (MNMFLLLMSLYLLGSARGTSG). The tract at residues 64–200 (TLSEHGSSEH…GEQPSGAPIS (137 aa)) is disordered. Repeat copies occupy residues 66-70 (SEHGS), 71-75 (SEHGS), 85-89 (PGEHA), 91-95 (SEHAS), 110-114 (VGEQP), 115-119 (SGEQP), 120-124 (SGEHL), 125-129 (SGEQS), 130-134 (LGEHA), 135-139 (SGEQP), 145-149 (SGEHA), 150-154 (SGEQP), 155-159 (SGEHA), 160-164 (SGEQP), 165-169 (SGEQP), 170-174 (SGEHA), 175-179 (SGEQS), 180-184 (LGEHA), and 190-194 (SGEQP). Positions 66–95 (SEHGSSEHGSREHTVAEHTPGEHAESEHAS) are 3 X 5 AA repeats of S-E-H-[GA]-A. The span at 69–95 (GSSEHGSREHTVAEHTPGEHAESEHAS) shows a compositional bias: basic and acidic residues. Positions 85-184 (PGEHAESEHA…SGEQSLGEHA (100 aa)) are 7 X 5 AA repeats of S-G-E-H-[AL]. The interval 110–194 (VGEQPSGEQP…LSEKPSGEQP (85 aa)) is 9 X 5 AA repeats of [SV]-G-E-Q-[PSA]. A glycan (N-linked (GlcNAc...) asparagine) is linked at Asn-278.

As to expression, testis.

Its subcellular location is the cytoplasmic vesicle. The protein resides in the secretory vesicle. It localises to the acrosome. The protein is Acrosomal protein SP-10 (ACRV1) of Papio hamadryas (Hamadryas baboon).